The sequence spans 331 residues: 7,8-didemethyl-8-hydroxy-5-deazariboflavin synthase (331 aa).

Residues 6–244 (ITFSKNAFLP…ADVAVQIPPN (239 aa)) form the Radical SAM core domain. The [4Fe-4S] cluster site is built by Cys-20, Cys-24, and Cys-27.

It belongs to the radical SAM superfamily. CofG family. As to quaternary structure, consists of two subunits, CofG and CofH. It depends on [4Fe-4S] cluster as a cofactor.

The enzyme catalyses 5-amino-5-(4-hydroxybenzyl)-6-(D-ribitylimino)-5,6-dihydrouracil + S-adenosyl-L-methionine = 7,8-didemethyl-8-hydroxy-5-deazariboflavin + 5'-deoxyadenosine + L-methionine + NH4(+) + H(+). Its pathway is cofactor biosynthesis; coenzyme F0 biosynthesis. Its function is as follows. Catalyzes the radical-mediated synthesis of 7,8-didemethyl-8-hydroxy-5-deazariboflavin from 5-amino-5-(4-hydroxybenzyl)-6-(D-ribitylimino)-5,6-dihydrouracil. In Methanoculleus marisnigri (strain ATCC 35101 / DSM 1498 / JR1), this protein is 7,8-didemethyl-8-hydroxy-5-deazariboflavin synthase.